Here is a 352-residue protein sequence, read N- to C-terminus: Glutamine synthetase (352 aa).

The 80-residue stretch at 3–82 folds into the GS beta-grasp domain; sequence YQAEYIWIDG…LCEVQLTDFT (80 aa). Residues 87 to 352 form the GS catalytic domain; that stretch reads TRAAALGVAE…TTPAPAEASV (266 aa). Mg(2+) is bound by residues Glu108 and Glu110. Glu164 is an ATP binding site. The Mg(2+) site is built by Glu169 and Glu176. An L-glutamate-binding site is contributed by Glu272.

It belongs to the glutamine synthetase family. As to quaternary structure, homooctamer and homotetramer. Requires Mg(2+) as cofactor.

It is found in the cytoplasm. It carries out the reaction L-glutamate + NH4(+) + ATP = L-glutamine + ADP + phosphate + H(+). In terms of biological role, catalyzes the ATP-dependent biosynthesis of glutamine from glutamate and ammonia. The polypeptide is Glutamine synthetase (Frankia alni).